We begin with the raw amino-acid sequence, 33 residues long: Cysteine-rich venom protein (33 aa).

The segment at 1-33 (NVDFNSESTRRKKKQKEIVDLHNSLRRRVSPTA) is disordered. The segment covering 24 to 33 (SLRRRVSPTA) has biased composition (basic residues).

It belongs to the CRISP family. Contains 8 disulfide bonds. As to expression, expressed by the venom gland.

The protein resides in the secreted. Functionally, blocks contraction of smooth muscle elicited by high potassium-induced depolarization, but does not block caffeine-stimulated contraction. May target voltage-gated calcium channels on smooth muscle (Cav). The sequence is that of Cysteine-rich venom protein from Naja naja (Indian cobra).